A 343-amino-acid polypeptide reads, in one-letter code: Type II restriction enzyme BsuMI component YdiS (343 aa).

As to quaternary structure, bsuMI restriction activity requires YdiR, YdiS and YdjA.

It carries out the reaction Endonucleolytic cleavage of DNA to give specific double-stranded fragments with terminal 5'-phosphates.. Its function is as follows. A P subtype restriction enzyme that recognizes the double-stranded sequence 5'-CTCGAG-3'; the cleavage site is unknown. This is Type II restriction enzyme BsuMI component YdiS (ydiS) from Bacillus subtilis (strain 168).